We begin with the raw amino-acid sequence, 248 residues long: Meiotically up-regulated gene 110 protein (248 aa).

The chain crosses the membrane as a helical span at residues Leu-23–Ile-43.

Its subcellular location is the membrane. Functionally, has a role in meiosis. The sequence is that of Meiotically up-regulated gene 110 protein (mug110) from Schizosaccharomyces pombe (strain 972 / ATCC 24843) (Fission yeast).